The primary structure comprises 321 residues: MSEKLQKVLARAGHGSRRELEALIRAGRVSVNGKVAVLGERLEDDNAVVRIDGHVVSVKAQEEVICRVLAYYKPEGELCTRHDPEGRRTVFDRLPKIRGSRWISVGRLDANTSGLLLFTTDGELANRLMHPSRQVEREYLVRVFGDVTEEKVRNLVRGVQLEDGMARFEDVMYAGGEGINHTFYVVINEGRNREVRRLWESQGTTVSRLKRVRYGDIFLDKKLPRGGWMELDLKQVNYLRELVELRPEKETVLNMAPDAATRKRERTRSQKIRRAVRRHEERISATPGRSGKAPARRKPGGESSTRNKVANQQQSSRKPRG.

Positions 3-68 constitute an S4 RNA-binding domain; it reads EKLQKVLARA…KAQEEVICRV (66 aa). Asp-109 (nucleophile) is an active-site residue. Positions 254–321 are disordered; it reads NMAPDAATRK…QQQSSRKPRG (68 aa). Positions 263 to 277 are enriched in basic residues; the sequence is KRERTRSQKIRRAVR. Over residues 302-321 the composition is skewed to polar residues; that stretch reads ESSTRNKVANQQQSSRKPRG.

This sequence belongs to the pseudouridine synthase RsuA family.

The enzyme catalyses uridine(2605) in 23S rRNA = pseudouridine(2605) in 23S rRNA. In terms of biological role, responsible for synthesis of pseudouridine from uracil-2605 in 23S ribosomal RNA. The chain is Ribosomal large subunit pseudouridine synthase B (rluB) from Vibrio cholerae serotype O1 (strain ATCC 39315 / El Tor Inaba N16961).